A 72-amino-acid polypeptide reads, in one-letter code: Translation initiation factor IF-1 (72 aa).

Residues M1–K72 form the S1-like domain.

It belongs to the IF-1 family. In terms of assembly, component of the 30S ribosomal translation pre-initiation complex which assembles on the 30S ribosome in the order IF-2 and IF-3, IF-1 and N-formylmethionyl-tRNA(fMet); mRNA recruitment can occur at any time during PIC assembly.

The protein resides in the cytoplasm. Its function is as follows. One of the essential components for the initiation of protein synthesis. Stabilizes the binding of IF-2 and IF-3 on the 30S subunit to which N-formylmethionyl-tRNA(fMet) subsequently binds. Helps modulate mRNA selection, yielding the 30S pre-initiation complex (PIC). Upon addition of the 50S ribosomal subunit IF-1, IF-2 and IF-3 are released leaving the mature 70S translation initiation complex. The chain is Translation initiation factor IF-1 from Caulobacter vibrioides (strain ATCC 19089 / CIP 103742 / CB 15) (Caulobacter crescentus).